Reading from the N-terminus, the 373-residue chain is LIM domain-binding protein 1 (373 aa).

2 disordered regions span residues 248–297 (PPAE…LSSQ) and 329–373 (DAAN…QASQ). Residues 266–282 (SGGSTMSSGGGNTNNSN) are compositionally biased toward low complexity. Residues 288–297 (PASTFALSSQ) show a composition bias toward polar residues. Positions 298 to 337 (DVMVVGEPTLMGGEFGDEDERLITRLENTQFDAANGIDDE) constitute an LIM interaction domain (LID) domain.

This sequence belongs to the LDB family. In terms of assembly, forms homodimers and heterodimers. Interacts with and activates lhx1/lim1. The stoichiometry of lhx1/lim1 and ldb1 is important for their function and an excess of ldb1 can inhibit lhx1/lim1 function. When bound to lhx1/lim1, escapes degradation by rnf12. Interacts with the N-terminal region of rnf12. Post-translationally, undergoes rnf12-mediated ubiquitin-proteasome-dependent degradation.

The protein localises to the nucleus. Binds to the LIM domain of a wide variety of LIM domain-containing transcription factors. Acts as a coactivator together with otx2 to stimulate lhx1/lim1-mediated activation of the gsc promoter in the Spemann organizer. Acts synergistically with lhx1/lim1 and ssbp in axis formation. The chain is LIM domain-binding protein 1 from Xenopus tropicalis (Western clawed frog).